The sequence spans 322 residues: Acetyl-coenzyme A carboxylase carboxyl transferase subunit alpha (322 aa).

In terms of domain architecture, CoA carboxyltransferase C-terminal spans 39–293; it reads RLQKKSQALT…RRALTDTLAE (255 aa).

Belongs to the AccA family. Acetyl-CoA carboxylase is a heterohexamer composed of biotin carboxyl carrier protein (AccB), biotin carboxylase (AccC) and two subunits each of ACCase subunit alpha (AccA) and ACCase subunit beta (AccD).

It localises to the cytoplasm. It carries out the reaction N(6)-carboxybiotinyl-L-lysyl-[protein] + acetyl-CoA = N(6)-biotinyl-L-lysyl-[protein] + malonyl-CoA. It participates in lipid metabolism; malonyl-CoA biosynthesis; malonyl-CoA from acetyl-CoA: step 1/1. Its function is as follows. Component of the acetyl coenzyme A carboxylase (ACC) complex. First, biotin carboxylase catalyzes the carboxylation of biotin on its carrier protein (BCCP) and then the CO(2) group is transferred by the carboxyltransferase to acetyl-CoA to form malonyl-CoA. This is Acetyl-coenzyme A carboxylase carboxyl transferase subunit alpha from Thiobacillus denitrificans (strain ATCC 25259 / T1).